The following is a 936-amino-acid chain: Calcium homeostasis endoplasmic reticulum protein (936 aa).

Residue Met1 is modified to N-acetylmethionine. The SURP motif repeat unit spans residues 15–57 (VIDKLAQFVARNGPEFEKMTMEKQKDNPKFSFLFGGEFYSYYK). N6-acetyllysine is present on Lys18. The disordered stretch occupies residues 77 to 102 (EPTSAMPPLPQPPLAPTASLTPAQGT). Positions 81-91 (AMPPLPQPPLA) are enriched in pro residues. The 141-residue stretch at 149–289 (ETQLDMSEFD…QLQSPALGLG (141 aa)) folds into the CID domain. A disordered region spans residues 328 to 646 (LAQQQQQQQQ…RQGPPHINHD (319 aa)). Low complexity predominate over residues 330–355 (QQQQQQQQQQQQQPQPQPQPQIQLPQ). Positions 363–383 (TPPPPAPPPASAPAPTIPPTT) are enriched in pro residues. The span at 395–405 (PGSSEYDTSAG) shows a compositional bias: polar residues. Residues 488–500 (PWNNQPDPNWNNQ) show a composition bias toward low complexity. Positions 534–550 (PFPPHQQHPQFNQPPHP) are enriched in pro residues. A compositionally biased stretch (low complexity) spans 551-560 (HNFNRFPPRF). Residues 561 to 572 (MQDDFPPRHPFE) are compositionally biased toward basic and acidic residues. Over residues 594 to 603 (PHHHPGHRMP) the composition is skewed to basic residues. Phosphotyrosine is present on Tyr723. Positions 731 to 887 (RARRRKGQEK…DPIKGGDVRD (157 aa)) are disordered. The span at 748–758 (SRSRSKSRGRS) shows a compositional bias: basic residues. Positions 759-773 (SSRSSSRSSKSSRSS) are enriched in low complexity. Over residues 774–824 (SRSHSRSRSRSSSRSRSRSRSRSRSSRSRSRSRSRSRSKSYSPGRRRRSRS) the composition is skewed to basic residues. A phosphoserine mark is found at Ser822, Ser824, and Ser826. Position 828 is a phosphothreonine (Thr828). A Phosphoserine modification is found at Ser837. The G-patch domain occupies 850-900 (EENKGHQMLVKMGWSGSGGLGAKEQGIQDPIKGGDVRDKWDQYKGVGVALD). Residue Lys853 forms a Glycyl lysine isopeptide (Lys-Gly) (interchain with G-Cter in SUMO2) linkage. 2 positions are modified to phosphoserine: Ser864 and Ser866. A Glycyl lysine isopeptide (Lys-Gly) (interchain with G-Cter in SUMO2) cross-link involves residue Lys881. Position 888 is an N6-acetyllysine (Lys888). A Phosphoserine modification is found at Ser913.

Its subcellular location is the cytoplasm. It localises to the perinuclear region. It is found in the endoplasmic reticulum. In terms of biological role, involved in calcium homeostasis, growth and proliferation. The polypeptide is Calcium homeostasis endoplasmic reticulum protein (Mus musculus (Mouse)).